The sequence spans 627 residues: Threonine--tRNA ligase (627 aa).

The catalytic stretch occupies residues 221–523; that stretch reads DHRKLGRELG…LIEHFAGDFP (303 aa). Residues Cys319, His370, and His500 each contribute to the Zn(2+) site.

Belongs to the class-II aminoacyl-tRNA synthetase family. Homodimer. The cofactor is Zn(2+).

It is found in the cytoplasm. It catalyses the reaction tRNA(Thr) + L-threonine + ATP = L-threonyl-tRNA(Thr) + AMP + diphosphate + H(+). Catalyzes the attachment of threonine to tRNA(Thr) in a two-step reaction: L-threonine is first activated by ATP to form Thr-AMP and then transferred to the acceptor end of tRNA(Thr). Also edits incorrectly charged L-seryl-tRNA(Thr). The polypeptide is Threonine--tRNA ligase (Gloeobacter violaceus (strain ATCC 29082 / PCC 7421)).